The sequence spans 211 residues: Bacteriorhodopsin (211 aa).

A helical membrane pass occupies residues 1-19 (IWLWLGTAGMFLGMLYFIA). Topologically, residues 20 to 33 (RGWGETDSRRQKFY) are cytoplasmic. A helical membrane pass occupies residues 34–52 (IATILITAIAFVNYLAMAL). Over 53 to 68 (GFGLTIVEFAGEEHPI) the chain is Extracellular. The chain crosses the membrane as a helical span at residues 69–86 (YWARYSDWLFTTPLLLYD). Residues 87–97 (LGLLAGADRNT) lie on the Cytoplasmic side of the membrane. The helical transmembrane segment at 98 to 117 (ITSLVSLDVLMIGTGLVATL) threads the bilayer. Residues 118-130 (SAGSGVLSAGAER) are Extracellular-facing. A helical transmembrane segment spans residues 131 to 150 (LVWWGISTAFLLVLLYFLFS). Topologically, residues 151–168 (SLSGRVADLPSDTRSTFK) are cytoplasmic. The helical transmembrane segment at 169-187 (TLRNLVTVVWLVYPVWWLI) threads the bilayer. The Extracellular portion of the chain corresponds to 188–199 (GTEGIGLVGIGI). The chain crosses the membrane as a helical span at residues 200 to 211 (ETAGFMVIDLTA).

The protein belongs to the archaeal/bacterial/fungal opsin family.

It is found in the cell membrane. Light-driven proton pump. The chain is Bacteriorhodopsin (bop) from Halobacterium halobium (strain port).